We begin with the raw amino-acid sequence, 360 residues long: Histidinol-phosphate aminotransferase (360 aa).

At Lys-222 the chain carries N6-(pyridoxal phosphate)lysine.

It belongs to the class-II pyridoxal-phosphate-dependent aminotransferase family. Histidinol-phosphate aminotransferase subfamily. Homodimer. Pyridoxal 5'-phosphate is required as a cofactor.

It carries out the reaction L-histidinol phosphate + 2-oxoglutarate = 3-(imidazol-4-yl)-2-oxopropyl phosphate + L-glutamate. The protein operates within amino-acid biosynthesis; L-histidine biosynthesis; L-histidine from 5-phospho-alpha-D-ribose 1-diphosphate: step 7/9. The protein is Histidinol-phosphate aminotransferase of Listeria welshimeri serovar 6b (strain ATCC 35897 / DSM 20650 / CCUG 15529 / CIP 8149 / NCTC 11857 / SLCC 5334 / V8).